The sequence spans 329 residues: DNA-directed RNA polymerase subunit alpha (329 aa).

An alpha N-terminal domain (alpha-NTD) region spans residues 1-235 (MQGSVTEFLK…EQLEAFVDLR (235 aa)). The tract at residues 249-329 (FDPILLRPVD…NWPPASIADE (81 aa)) is alpha C-terminal domain (alpha-CTD).

It belongs to the RNA polymerase alpha chain family. In terms of assembly, homodimer. The RNAP catalytic core consists of 2 alpha, 1 beta, 1 beta' and 1 omega subunit. When a sigma factor is associated with the core the holoenzyme is formed, which can initiate transcription.

It catalyses the reaction RNA(n) + a ribonucleoside 5'-triphosphate = RNA(n+1) + diphosphate. Its function is as follows. DNA-dependent RNA polymerase catalyzes the transcription of DNA into RNA using the four ribonucleoside triphosphates as substrates. The polypeptide is DNA-directed RNA polymerase subunit alpha (Enterobacter sp. (strain 638)).